Consider the following 451-residue polypeptide: Alpha-galactosidase (451 aa).

5 to 71 contacts NAD(+); it reads PKITFIGAGS…ASGRITCHTN (67 aa). Asn151 provides a ligand contact to substrate. Cys173 contributes to the Mn(2+) binding site. Catalysis depends on His174, which acts as the Proton donor. His203 is a binding site for Mn(2+). Arg287 contacts substrate.

This sequence belongs to the glycosyl hydrolase 4 family. As to quaternary structure, homodimer. It depends on Mn(2+) as a cofactor. NAD(+) is required as a cofactor.

The enzyme catalyses Hydrolysis of terminal, non-reducing alpha-D-galactose residues in alpha-D-galactosides, including galactose oligosaccharides, galactomannans and galactolipids.. The chain is Alpha-galactosidase (melA) from Salmonella typhimurium (strain LT2 / SGSC1412 / ATCC 700720).